Here is a 685-residue protein sequence, read N- to C-terminus: DNA-directed RNA polymerase subunit beta' (685 aa).

Zn(2+) is bound by residues Cys69, Cys71, Cys87, and Cys90. Positions 489, 491, and 493 each coordinate Mg(2+).

Belongs to the RNA polymerase beta' chain family. RpoC1 subfamily. In terms of assembly, in plastids the minimal PEP RNA polymerase catalytic core is composed of four subunits: alpha, beta, beta', and beta''. When a (nuclear-encoded) sigma factor is associated with the core the holoenzyme is formed, which can initiate transcription. Requires Mg(2+) as cofactor. Zn(2+) serves as cofactor.

The protein resides in the plastid. It is found in the chloroplast. The enzyme catalyses RNA(n) + a ribonucleoside 5'-triphosphate = RNA(n+1) + diphosphate. DNA-dependent RNA polymerase catalyzes the transcription of DNA into RNA using the four ribonucleoside triphosphates as substrates. The chain is DNA-directed RNA polymerase subunit beta' from Gossypium hirsutum (Upland cotton).